Here is a 285-residue protein sequence, read N- to C-terminus: Polyamine aminopropyltransferase (285 aa).

The PABS domain maps to 5–241; the sequence is DSWFTEHFQA…GWWSVTLSSK (237 aa). Gln-35 contributes to the S-methyl-5'-thioadenosine binding site. The spermidine site is built by His-66 and Asp-90. S-methyl-5'-thioadenosine is bound by residues Asp-110 and 141 to 142; that span reads DG. Asp-160 serves as the catalytic Proton acceptor. Spermidine is bound at residue 160–163; that stretch reads DSTD. Pro-167 is a binding site for S-methyl-5'-thioadenosine.

Belongs to the spermidine/spermine synthase family. In terms of assembly, homodimer or homotetramer.

It localises to the cytoplasm. The enzyme catalyses S-adenosyl 3-(methylsulfanyl)propylamine + putrescine = S-methyl-5'-thioadenosine + spermidine + H(+). It participates in amine and polyamine biosynthesis; spermidine biosynthesis; spermidine from putrescine: step 1/1. In terms of biological role, catalyzes the irreversible transfer of a propylamine group from the amino donor S-adenosylmethioninamine (decarboxy-AdoMet) to putrescine (1,4-diaminobutane) to yield spermidine. The polypeptide is Polyamine aminopropyltransferase (Xylella fastidiosa (strain 9a5c)).